A 614-amino-acid polypeptide reads, in one-letter code: Vitamin B12 transporter BtuB (614 aa).

Residues 1–20 form the signal peptide; the sequence is MIKKASLLTACSVTAFSAWA. Residues 26–33 carry the TonB box motif; the sequence is DTLVVTAN. A TBDR plug domain is found at 38 to 152; sequence PRSTVLAPTT…IGGVVNIITT (115 aa). Cyanocob(III)alamin-binding positions include leucine 83, serine 85, asparagine 92, and 110 to 111; that span reads VS. In terms of domain architecture, TBDR beta-barrel spans 155-614; that stretch reads EPGTEISAGW…EYTLSGSYTF (460 aa). The next 3 membrane-spanning stretches (beta stranded) occupy residues 158 to 165, 169 to 178, and 184 to 195; these read TEISAGWG, YQNYDVSTQQ, and TRVTLLGDYAHT. Ca(2+)-binding residues include aspartate 199, glutamine 211, aspartate 213, and aspartate 215. A run of 2 beta stranded transmembrane segments spans residues 217 to 227 and 232 to 248; these read FLSKTLYGALE and DAWSGFVRGYGYDNRTN. Positions 249 and 250 each coordinate Ca(2+). Alanine 251 contacts cyanocob(III)alamin. Residue aspartate 261 participates in Ca(2+) binding. 14 beta stranded membrane passes run 263-277, 279-296, 309-325, 328-337, 353-369, 371-381, 385-400, 403-417, 434-443, 449-458, 473-490, 494-509, 517-529, and 535-550; these read RKLYSQSWDAGLRYN, ELIKSQLITSYSHSKDYN, TLDEMKQYTVQWANNVI, HGSIGAGVDW, YDQRNTGIYLTGLQQVG, FTFEGAARNDD, FGRHGTWQTSAGWEFI, YRFIASYGTSYKAPN, KSKQWEGAFE, VNWRISGYRN, YYNEGKARIKGVEATANF, PLTHTVSYDYVDARNA, RRAKQQVKYQLDW, and DWGITYQYLGTRYDKD. A cyanocob(III)alamin-binding site is contributed by threonine 309. Arginine 517 provides a ligand contact to cyanocob(III)alamin. A cyanocob(III)alamin-binding site is contributed by tyrosine 551. Beta stranded transmembrane passes span 558 to 572, 585 to 596, and 602 to 614; these read TVKMGGVSLWDLAVA, IANLFDKDYETV, and AGREYTLSGSYTF. The short motif at 597–614 is the TonB C-terminal box element; that stretch reads YGYQTAGREYTLSGSYTF.

Belongs to the TonB-dependent receptor family. BtuB (TC 1.B.14.3.1) subfamily.

Its subcellular location is the cell outer membrane. Involved in the active translocation of vitamin B12 (cyanocobalamin) across the outer membrane to the periplasmic space. It derives its energy for transport by interacting with the trans-periplasmic membrane protein TonB. This Escherichia coli O139:H28 (strain E24377A / ETEC) protein is Vitamin B12 transporter BtuB.